A 324-amino-acid chain; its full sequence is Zinc finger C2HC domain-containing protein 1A (324 aa).

A C2HC/C3H-type 1 zinc finger spans residues 15-44 (ELLPCKICGRTFFPVALKKHGPICKKTATK). Residues Cys19, Cys22, His34, and Cys38 each contribute to the Zn(2+) site. The disordered stretch occupies residues 43–83 (TKKRKTFDSSRQRAEGTDIPTVKPLKPRPEPPKKPSNWRRK). The span at 48–58 (TFDSSRQRAEG) shows a compositional bias: basic and acidic residues. The C2HC/C3H-type 2 zinc-finger motif lies at 118 to 147 (DYIQCPYCQRRFNENAADRHINFCKEQAAR). Cys122, Cys125, His137, and Cys141 together coordinate Zn(2+). Disordered stretches follow at residues 150 to 224 (NKGK…LSPS) and 236 to 259 (NVKP…LTNK). Composition is skewed to low complexity over residues 176–187 (SNSPGTASSGSS) and 196–215 (GKTV…SSLG). Phosphoserine is present on Ser222. Phosphothreonine is present on Thr243. Ser291 carries the phosphoserine modification.

The protein belongs to the ZC2HC1 family. Zn(2+) is required as a cofactor.

The polypeptide is Zinc finger C2HC domain-containing protein 1A (ZC2HC1A) (Pongo abelii (Sumatran orangutan)).